A 401-amino-acid chain; its full sequence is Adaptive-response sensory kinase SasA (401 aa).

One can recognise a Histidine kinase domain in the interval 175 to 400 (MLVHDLRNPL…WFHFTLPVYP (226 aa)). Position 178 is a phosphohistidine; by autocatalysis (His178).

In terms of assembly, homooligomerizes. Interacts with KaiC. Participates in the KaiABC clock complex, whose core is composed of a KaiC homohexamer, 6 KaiB and up to 6 KaiA dimers. SasA and KaiB(fs) compete to bind to KaiC.

The catalysed reaction is ATP + protein L-histidine = ADP + protein N-phospho-L-histidine.. In terms of biological role, member of the two-component regulatory system SasA/RpaA involved in genome-wide circadian gene expression. One of several clock output pathways. Participates in the Kai clock protein complex, the main circadian regulator in cyanobacteria, via its interaction with KaiC. KaiC enhances the autophosphorylation activity of SasA, which then transfers its phosphate group to RpaA to activate it. In addition to its output function, recruits fold-shifted KaiB (KaiB(fs)) to KaiC to cooperatively form the KaiB(6):KaiC(6) complex (independent of SasA kinase activity). Required for robustness of the circadian rhythm of gene expression and is involved in clock output, also required for adaptation to light/dark cycles. This is Adaptive-response sensory kinase SasA from Trichormus variabilis (strain ATCC 29413 / PCC 7937) (Anabaena variabilis).